Reading from the N-terminus, the 220-residue chain is MATVKGLLKGLRYITQIFDEEKDKDMQIGFPTDVKHVAHIGSDGPATNVPSWMGDFKPQENENGQVVSRADANNNQIGEGVGLQELLPPTDKPKHKKTRRKSETVSQNGSPPRRNSSASASDMQPKNTRRHHRSRHGSIDSSNDPSVRRRRVVSVTTNDMEGSYPLSDSSTHSRKSTSRHRKPKGSGGGELSMKKTKGKTENPIVESVDTCNDNNISDKE.

The CRIB domain maps to 28-41; sequence IGFPTDVKHVAHIG. Positions 39-220 are disordered; the sequence is HIGSDGPATN…CNDNNISDKE (182 aa). A compositionally biased stretch (polar residues) spans 61 to 77; sequence NENGQVVSRADANNNQI. The segment covering 108–121 has biased composition (low complexity); that stretch reads NGSPPRRNSSASAS. 2 stretches are compositionally biased toward basic residues: residues 127 to 136 and 172 to 184; these read NTRRHHRSRH and HSRK…RKPK. The segment covering 209 to 220 has biased composition (polar residues); sequence DTCNDNNISDKE.

As to quaternary structure, interacts with ARAC11/ROP1. Expressed in flowers and pollen.

Its subcellular location is the cytoplasm. In terms of biological role, functions as a downstream effector of Rho-related GTP binding proteins of the 'Rho of Plants' (ROPs) family. Participates in the propagation of ROP GTPase signals in specific cellular responses. Functions as a downstream effector of ARAC11/ROP1 to activate calcium signaling that leads to F-actin disassembly associated with exocytosis in the tip of the growing pollen tube. Counteracts the ARAC11/ROP1-RIC4 pathway, which promotes apical F-actin assembly associated with vesicle accumulation, to control actin dynamics and pollen tube apical growth. The protein is CRIB domain-containing protein RIC3 (RIC3) of Arabidopsis thaliana (Mouse-ear cress).